The sequence spans 252 residues: Thiamine thiazole synthase (252 aa).

NAD(+)-binding positions include Ser-35, 54-55 (EK), Gly-62, Val-126, and 152-154 (HVD). Positions 154 and 169 each coordinate Fe cation. Position 217 (Met-217) interacts with NAD(+). Arg-227 contacts glycine.

This sequence belongs to the THI4 family. Homooctamer; tetramer of dimers. The cofactor is Fe(2+).

The catalysed reaction is hydrogen sulfide + glycine + NAD(+) = ADP-5-ethyl-4-methylthiazole-2-carboxylate + nicotinamide + 3 H2O + H(+). Its pathway is cofactor biosynthesis; thiamine diphosphate biosynthesis. Involved in the biosynthesis of the thiazole moiety of thiamine. Catalyzes the conversion of NAD and glycine to adenosine diphosphate 5-(2-hydroxyethyl)-4-methylthiazole-2-carboxylate (ADT), an adenylated thiazole intermediate, using free sulfide as a source of sulfur. This is Thiamine thiazole synthase from Pyrococcus horikoshii (strain ATCC 700860 / DSM 12428 / JCM 9974 / NBRC 100139 / OT-3).